Here is a 491-residue protein sequence, read N- to C-terminus: MAEELTPENPAIPETPEETEEPIKQRKNGLYPGVSDELAENMQSGWADTELHDLEPIAQAAETAARRAALSARFPGERLVIPAGNLKTRSNDTEYSFRASVEYAYLTGNQTEDGVLVMEPEGDGHAATIYLLPRSDRENGEFWLDGQGELWVGRRHSLAEAGELYGIPASDVRELAGSLREATGPVRVVRGFDAGIEAALTDKVTAERDEELRVFLSEARLVKDEFEIGELQKAVDSTVRGFEDVVKVLDRAEATSERYIEGTFFLRARVEGNDVGYGSICAAGPHACTLHWVRNDGPVRSGDLLLLDAGVETHTYYTADVTRTLPISGTYSELQKKIYDAVYDAQEAGIAAVRPGAKYRDFHDASQRVLAERLVEWGLVEGPVERVLELGLQRRWTLHGTGHMLGMDVHDCAAARVESYVDGTLEPGMVLTVEPGLYFQADDLTVPEEYRGIGVRIEDDILVTADGNRNLSAGLPRRSDEVEEWMAALKG.

The interval 1-32 (MAEELTPENPAIPETPEETEEPIKQRKNGLYP) is disordered. The Mn(2+) site is built by Asp-308, Asp-320, His-403, Glu-434, and Glu-458.

This sequence belongs to the peptidase M24B family. As to quaternary structure, homodimer. Mn(2+) is required as a cofactor.

It catalyses the reaction Release of any N-terminal amino acid, including proline, that is linked to proline, even from a dipeptide or tripeptide.. The sequence is that of Xaa-Pro aminopeptidase 1 (pepPI) from Streptomyces coelicolor (strain ATCC BAA-471 / A3(2) / M145).